We begin with the raw amino-acid sequence, 261 residues long: Protein TfpB (261 aa).

The protein is Protein TfpB (tfpB) of Moraxella bovis.